The chain runs to 344 residues: UDP-glucose 4-epimerase (344 aa).

NAD(+)-binding positions include 15 to 17 (GYI), 36 to 40 (DNLSN), 63 to 64 (DI), Phe-85, and Lys-89. 129 to 131 (SAT) provides a ligand contact to substrate. The Proton acceptor role is filled by Tyr-153. 2 residues coordinate NAD(+): Lys-157 and Tyr-181. Residues 181-183 (YFN), 202-204 (NNL), 220-222 (SIF), Arg-235, and 297-300 (RKGD) each bind substrate.

The protein belongs to the NAD(P)-dependent epimerase/dehydratase family. Homodimer. NAD(+) is required as a cofactor.

The enzyme catalyses UDP-alpha-D-glucose = UDP-alpha-D-galactose. It catalyses the reaction UDP-N-acetyl-alpha-D-glucosamine = UDP-N-acetyl-alpha-D-galactosamine. The protein operates within carbohydrate metabolism; galactose metabolism. Functionally, catalyzes two distinct but analogous reactions: the reversible epimerization of UDP-glucose to UDP-galactose and the reversible epimerization of UDP-N-acetylglucosamine to UDP-N-acetylgalactosamine. The reaction with UDP-Gal plays a critical role in the Leloir pathway of galactose catabolism in which galactose is converted to the glycolytic intermediate glucose 6-phosphate. It contributes to the catabolism of dietary galactose and enables the endogenous biosynthesis of both UDP-Gal and UDP-GalNAc when exogenous sources are limited. Both UDP-sugar interconversions are important in the synthesis of glycoproteins and glycolipids. The polypeptide is UDP-glucose 4-epimerase (galE) (Dictyostelium discoideum (Social amoeba)).